The primary structure comprises 947 residues: Protein NETWORKED 2D (947 aa).

The NAB domain maps to 10–90 (YSWWWASHIR…ERYDHISTEL (81 aa)). 3 coiled-coil regions span residues 176 to 205 (KPEA…SSYE), 247 to 342 (MTET…HFES), and 375 to 433 (TALI…VLDK). Disordered regions lie at residues 455-555 (NLHE…DKTD) and 580-620 (EKQG…GEPD). Over residues 474–514 (PQKDLEGEKRTLDISEEIKEHQKETGEEKKEAPVKSVKFEQ) the composition is skewed to basic and acidic residues. Positions 525–536 (TIPSTNPDTVLE) are enriched in polar residues. Composition is skewed to basic and acidic residues over residues 537–555 (STEK…DKTD), 580–589 (EKQGESDKID), and 610–620 (EDQKEKEGEPD). Coiled coils occupy residues 645 to 684 (RNFK…LLQK) and 744 to 773 (GQIQ…DGSS).

Belongs to the NET family.

Functionally, plant-specific actin binding protein. May be part of a membrane-cytoskeletal adapter complex. The protein is Protein NETWORKED 2D of Arabidopsis thaliana (Mouse-ear cress).